The following is a 367-amino-acid chain: MKIIQTFFIITLLWLSQGVQAERVKDLAAIAGVRSNQLVGYGLVVGLSGTGDQVTQISYTRQSLRNMLREFGIIMPPGVNLQPKNVAAVSIHAQLPPFAKPGQSIDITVSSLGNAKSLRGGSLLLTPLKGADGRVYAMAQGNLIVGGFGAEGNDGSRVTVNIPSTGRIPNGATVERGVPNPFNNGGPIILNLHAADFTTANRVAAAINSAIGAGTARPLDGASIQVNAPAVPAQRVSFVSLLENLEVDPGEAPAKIVINSRTGTVVIGQHVRVQPAAVSHGRLTVTITANPAISQPPPLSGGQTAVVPRTDIDIQEEGSRMFLFAPGVSLGEIVRAVNQVGAAPGDLVAILEALKQVGALSAELVVL.

The first 21 residues, 1-21, serve as a signal peptide directing secretion; sequence MKIIQTFFIITLLWLSQGVQA.

The protein belongs to the FlgI family. The basal body constitutes a major portion of the flagellar organelle and consists of four rings (L,P,S, and M) mounted on a central rod.

Its subcellular location is the periplasm. The protein localises to the bacterial flagellum basal body. Functionally, assembles around the rod to form the L-ring and probably protects the motor/basal body from shearing forces during rotation. The protein is Flagellar P-ring protein of Nitrosococcus oceani (strain ATCC 19707 / BCRC 17464 / JCM 30415 / NCIMB 11848 / C-107).